The primary structure comprises 98 residues: MTLIHMNIIMAFSMSLVGLLMYRSHLMSALLCLEGMMLSLFVLAALTILNSHFTLANMMPIILLVFAACEAAIGLALLVTISNTYGTDYVQNLNLLQC.

The next 3 membrane-spanning stretches (helical) occupy residues 1-21 (MTLIHMNIIMAFSMSLVGLLM), 29-49 (ALLCLEGMMLSLFVLAALTIL), and 61-81 (IILLVFAACEAAIGLALLVTI).

This sequence belongs to the complex I subunit 4L family. Core subunit of respiratory chain NADH dehydrogenase (Complex I) which is composed of 45 different subunits.

Its subcellular location is the mitochondrion inner membrane. It carries out the reaction a ubiquinone + NADH + 5 H(+)(in) = a ubiquinol + NAD(+) + 4 H(+)(out). Core subunit of the mitochondrial membrane respiratory chain NADH dehydrogenase (Complex I) which catalyzes electron transfer from NADH through the respiratory chain, using ubiquinone as an electron acceptor. Part of the enzyme membrane arm which is embedded in the lipid bilayer and involved in proton translocation. This Eubalaena australis (Southern right whale) protein is NADH-ubiquinone oxidoreductase chain 4L (MT-ND4L).